An 820-amino-acid polypeptide reads, in one-letter code: Serine/threonine-protein phosphatase 4 regulatory subunit 3 (820 aa).

In terms of domain architecture, WH1 spans 1 to 100 (MSDTRRRVKV…DEIWEKICQV (100 aa)). Disordered stretches follow at residues 687–711 (EDEE…DFPE) and 750–820 (AANG…RLGS). Residues 701–711 (EKTKTEDDFPE) show a composition bias toward basic and acidic residues. The segment covering 750 to 761 (AANGANSTNSKS) has biased composition (polar residues). The span at 770-784 (SSNGSSSKNTSLTTT) shows a compositional bias: low complexity. Over residues 798–809 (YPDDEDEEEEED) the composition is skewed to acidic residues.

It belongs to the SMEK family. In terms of assembly, serine/threonine-protein phosphatase 4 (PP4) occurs in different assemblies of the catalytic and one or more regulatory subunits.

In terms of biological role, regulatory subunit of serine/threonine-protein phosphatase 4 (PP4). The protein is Serine/threonine-protein phosphatase 4 regulatory subunit 3 of Xenopus tropicalis (Western clawed frog).